The sequence spans 461 residues: L-seryl-tRNA(Sec) selenium transferase (461 aa).

Lysine 294 bears the N6-(pyridoxal phosphate)lysine mark.

It belongs to the SelA family. Pyridoxal 5'-phosphate serves as cofactor.

The protein localises to the cytoplasm. The enzyme catalyses L-seryl-tRNA(Sec) + selenophosphate + H(+) = L-selenocysteinyl-tRNA(Sec) + phosphate. It functions in the pathway aminoacyl-tRNA biosynthesis; selenocysteinyl-tRNA(Sec) biosynthesis; selenocysteinyl-tRNA(Sec) from L-seryl-tRNA(Sec) (bacterial route): step 1/1. Converts seryl-tRNA(Sec) to selenocysteinyl-tRNA(Sec) required for selenoprotein biosynthesis. The protein is L-seryl-tRNA(Sec) selenium transferase of Haemophilus influenzae (strain ATCC 51907 / DSM 11121 / KW20 / Rd).